The sequence spans 174 residues: Ferritin, heavy subunit (174 aa).

A Ferritin-like diiron domain is found at 7–156; sequence QNFHKDCEAA…DWVTNLRRLG (150 aa). Residues glutamate 24, glutamate 59, histidine 62, glutamate 104, and glutamine 138 each coordinate Fe cation.

It belongs to the ferritin family. In liver, forms a heteromer consisting of middle and heavy subunits. The functional molecule forms a roughly spherical shell with a diameter of 12 nm and contains a central cavity into which the insoluble mineral iron core is deposited. As to expression, liver (at protein level).

It catalyses the reaction 4 Fe(2+) + O2 + 4 H(+) = 4 Fe(3+) + 2 H2O. Functionally, stores iron in a soluble, non-toxic, readily available form. Important for iron homeostasis. Has ferroxidase activity. Iron is taken up in the ferrous form and deposited as ferric hydroxides after oxidation. Also plays a role in delivery of iron to cells. Mediates iron uptake in capsule cells of the developing kidney. Delivery to lysosomes is mediated by the cargo receptor NCOA4 for autophagic degradation and release of iron. This chain is Ferritin, heavy subunit, found in Trematomus newnesi (Dusky notothen).